The primary structure comprises 264 residues: Thiazole synthase (264 aa).

Lys106 functions as the Schiff-base intermediate with DXP in the catalytic mechanism. 1-deoxy-D-xylulose 5-phosphate is bound by residues Gly167, 193–194, and 215–216; these read AG and NT.

This sequence belongs to the ThiG family. In terms of assembly, homotetramer. Forms heterodimers with either ThiH or ThiS.

It is found in the cytoplasm. It carries out the reaction [ThiS sulfur-carrier protein]-C-terminal-Gly-aminoethanethioate + 2-iminoacetate + 1-deoxy-D-xylulose 5-phosphate = [ThiS sulfur-carrier protein]-C-terminal Gly-Gly + 2-[(2R,5Z)-2-carboxy-4-methylthiazol-5(2H)-ylidene]ethyl phosphate + 2 H2O + H(+). It participates in cofactor biosynthesis; thiamine diphosphate biosynthesis. Its function is as follows. Catalyzes the rearrangement of 1-deoxy-D-xylulose 5-phosphate (DXP) to produce the thiazole phosphate moiety of thiamine. Sulfur is provided by the thiocarboxylate moiety of the carrier protein ThiS. In vitro, sulfur can be provided by H(2)S. The protein is Thiazole synthase of Xanthomonas euvesicatoria pv. vesicatoria (strain 85-10) (Xanthomonas campestris pv. vesicatoria).